A 374-amino-acid chain; its full sequence is Cyclin-D (374 aa).

The protein belongs to the cyclin family. Cyclin D subfamily.

This chain is Cyclin-D (CycD), found in Ostreococcus tauri.